A 277-amino-acid chain; its full sequence is 2-dehydro-3-deoxyphosphooctonate aldolase (277 aa).

The protein belongs to the KdsA family.

The protein localises to the cytoplasm. It catalyses the reaction D-arabinose 5-phosphate + phosphoenolpyruvate + H2O = 3-deoxy-alpha-D-manno-2-octulosonate-8-phosphate + phosphate. It functions in the pathway carbohydrate biosynthesis; 3-deoxy-D-manno-octulosonate biosynthesis; 3-deoxy-D-manno-octulosonate from D-ribulose 5-phosphate: step 2/3. The protein operates within bacterial outer membrane biogenesis; lipopolysaccharide biosynthesis. The protein is 2-dehydro-3-deoxyphosphooctonate aldolase of Brucella melitensis biotype 2 (strain ATCC 23457).